The primary structure comprises 612 residues: Probable Xaa-Pro aminopeptidase P (612 aa).

Mn(2+)-binding residues include D409, D420, E518, and E532.

Belongs to the peptidase M24B family. Requires Mn(2+) as cofactor.

It carries out the reaction Release of any N-terminal amino acid, including proline, that is linked to proline, even from a dipeptide or tripeptide.. In terms of biological role, catalyzes the removal of a penultimate prolyl residue from the N-termini of peptides. The polypeptide is Probable Xaa-Pro aminopeptidase P (AMPP) (Verticillium alfalfae (strain VaMs.102 / ATCC MYA-4576 / FGSC 10136) (Verticillium wilt of alfalfa)).